Here is a 63-residue protein sequence, read N- to C-terminus: Lysis protein (63 aa).

Residues 21 to 43 (LYVWIALAIVLSDFTSIFSHWIW) form a helical membrane-spanning segment.

Belongs to the Leviviricetes lysis protein family.

It is found in the host cell inner membrane. Its subcellular location is the host cell outer membrane. Its function is as follows. Induces the formation of specific membrane adhesion sites between the inner and outer membranes, apparently leading to host cell lysis. Lysis may be performed via activation of host murein hydrolases. This Escherichia coli (Bacteriophage GA) protein is Lysis protein.